The sequence spans 668 residues: tRNA 5-methylaminomethyl-2-thiouridine biosynthesis bifunctional protein MnmC (668 aa).

Residues 1 to 245 (MKHYSIQPAN…KREMLCGVME (245 aa)) form a tRNA (mnm(5)s(2)U34)-methyltransferase region. The interval 270–668 (IGGGIASALL…LLKGKAVKAG (399 aa)) is FAD-dependent cmnm(5)s(2)U34 oxidoreductase.

In the N-terminal section; belongs to the methyltransferase superfamily. tRNA (mnm(5)s(2)U34)-methyltransferase family. This sequence in the C-terminal section; belongs to the DAO family. FAD is required as a cofactor.

The protein localises to the cytoplasm. The catalysed reaction is 5-aminomethyl-2-thiouridine(34) in tRNA + S-adenosyl-L-methionine = 5-methylaminomethyl-2-thiouridine(34) in tRNA + S-adenosyl-L-homocysteine + H(+). In terms of biological role, catalyzes the last two steps in the biosynthesis of 5-methylaminomethyl-2-thiouridine (mnm(5)s(2)U) at the wobble position (U34) in tRNA. Catalyzes the FAD-dependent demodification of cmnm(5)s(2)U34 to nm(5)s(2)U34, followed by the transfer of a methyl group from S-adenosyl-L-methionine to nm(5)s(2)U34, to form mnm(5)s(2)U34. The protein is tRNA 5-methylaminomethyl-2-thiouridine biosynthesis bifunctional protein MnmC of Escherichia coli O6:H1 (strain CFT073 / ATCC 700928 / UPEC).